The primary structure comprises 86 residues: uncharacterized protein (86 aa).

4Fe-4S ferredoxin-type domains lie at methionine 1 to glutamate 29 and tyrosine 31 to glutamate 65. Residues cysteine 9, cysteine 12, cysteine 15, cysteine 19, cysteine 38, cysteine 41, cysteine 50, and cysteine 54 each coordinate [4Fe-4S] cluster.

The cofactor is [4Fe-4S] cluster.

This is an uncharacterized protein from Haemophilus influenzae (strain ATCC 51907 / DSM 11121 / KW20 / Rd).